The primary structure comprises 77 residues: Translation initiation factor IF-1, chloroplastic (77 aa).

Residues 1–71 (MKEQKWIHEG…SRGRIIYRLR (71 aa)) form the S1-like domain.

It belongs to the IF-1 family. In terms of assembly, component of the 30S ribosomal translation pre-initiation complex which assembles on the 30S ribosome in the order IF-2 and IF-3, IF-1 and N-formylmethionyl-tRNA(fMet); mRNA recruitment can occur at any time during PIC assembly.

Its subcellular location is the plastid. It localises to the chloroplast. One of the essential components for the initiation of protein synthesis. Stabilizes the binding of IF-2 and IF-3 on the 30S subunit to which N-formylmethionyl-tRNA(fMet) subsequently binds. Helps modulate mRNA selection, yielding the 30S pre-initiation complex (PIC). Upon addition of the 50S ribosomal subunit IF-1, IF-2 and IF-3 are released leaving the mature 70S translation initiation complex. The sequence is that of Translation initiation factor IF-1, chloroplastic from Buxus microphylla (Littleleaf boxwood).